The primary structure comprises 117 residues: Holo-[acyl-carrier-protein] synthase (117 aa).

Aspartate 6 and glutamate 55 together coordinate Mg(2+).

It belongs to the P-Pant transferase superfamily. AcpS family. Mg(2+) serves as cofactor.

It localises to the cytoplasm. It catalyses the reaction apo-[ACP] + CoA = holo-[ACP] + adenosine 3',5'-bisphosphate + H(+). Functionally, transfers the 4'-phosphopantetheine moiety from coenzyme A to a Ser of acyl-carrier-protein. The polypeptide is Holo-[acyl-carrier-protein] synthase (Chlorobaculum parvum (strain DSM 263 / NCIMB 8327) (Chlorobium vibrioforme subsp. thiosulfatophilum)).